The primary structure comprises 323 residues: MIDFGNFYSLIAKNHLSHWLETLPAQIANWQREQQHGLFKQWSNAVEFLPEIKPYRLDLLHSVTAESEEPLSAGQIKRIETLMRNLMPWRKGPFSLYGVNIDTEWRSDWKWDRVLPHLSDLTGRTILDVGCGSGYHMWRMIGAGAHLAVGIDPTQLFLCQFEAVRKLLGNDQRAHLLPLGIEQLPALKAFDTVFSMGVLYHRRSPLEHLWQLKDQLVNEGELVLETLVIDGDENTVLVPGDRYAQMRNVYFIPSALALKNWLKKCGFVDIRIADVSVTTTEEQRRTEWMVTESLSDFLDPHDPSKTVEGYPAPKRAVLIARKP.

Carboxy-S-adenosyl-L-methionine-binding positions include Lys91, Trp105, Lys110, Gly130, 152 to 154, 181 to 182, Met196, Tyr200, and Arg315; these read DPT and IE.

Belongs to the class I-like SAM-binding methyltransferase superfamily. CmoB family. Homotetramer.

It catalyses the reaction carboxy-S-adenosyl-L-methionine + 5-hydroxyuridine(34) in tRNA = 5-carboxymethoxyuridine(34) in tRNA + S-adenosyl-L-homocysteine + H(+). Catalyzes carboxymethyl transfer from carboxy-S-adenosyl-L-methionine (Cx-SAM) to 5-hydroxyuridine (ho5U) to form 5-carboxymethoxyuridine (cmo5U) at position 34 in tRNAs. The sequence is that of tRNA U34 carboxymethyltransferase from Escherichia coli O157:H7.